A 616-amino-acid polypeptide reads, in one-letter code: uncharacterized protein (616 aa).

This is an uncharacterized protein from Methanocaldococcus jannaschii (strain ATCC 43067 / DSM 2661 / JAL-1 / JCM 10045 / NBRC 100440) (Methanococcus jannaschii).